Here is a 425-residue protein sequence, read N- to C-terminus: G protein-activated inward rectifier potassium channel 2 (425 aa).

Topologically, residues 1–91 are cytoplasmic; it reads MTMAKLTESM…IFTTLVDLKW (91 aa). A phosphoserine mark is found at Ser18 and Ser25. A helical transmembrane segment spans residues 92–116; the sequence is RFNLLIFVMVYTVTWLFFGMIWWLI. Residues 117–140 lie on the Extracellular side of the membrane; sequence AYIRGDMDHIEDPSWTPCVTNLNG. The helical; Pore-forming intramembrane region spans 141–152; sequence FVSAFLFSIETE. The segment at residues 153-159 is an intramembrane region (pore-forming); it reads TTIGYGY. A Selectivity filter motif is present at residues 154-159; it reads TIGYGY. Residues 160-168 lie on the Extracellular side of the membrane; sequence RVITDKCPE. The chain crosses the membrane as a helical span at residues 169–190; sequence GIILLLIQSVLGSIVNAFMVGC. Topologically, residues 191-425 are cytoplasmic; sequence MFVKISQPKK…VANLENESKV (235 aa). Positions 392–425 are disordered; the sequence is NQHAELETEEEEKNPEELTERNGDVANLENESKV. The short motif at 422 to 425 is the PDZ-binding element; it reads ESKV.

Belongs to the inward rectifier-type potassium channel (TC 1.A.2.1) family. KCNJ6 subfamily. As to quaternary structure, associates with KCNJ3/GIRK1to form a G-protein-activated heteromultimer pore-forming unit. Associates with KCNJ5/GRIK4 to form a G-protein-activated heteromultimer pore-forming unit. The resulting inward current is much larger. Interacts (via PDZ-binding motif) with SNX27 (via PDZ domain); the interaction is required when endocytosed to prevent degradation in lysosomes and promote recycling to the plasma membrane. Associates with KCNJ3/GRIK1 to form a G-protein-activated heteromultimer pore-forming unit. In terms of assembly, associates with KCNJ3/GRIK1 to form a G-protein-activated heteromultimer pore-forming unit. The resulting inward current is much larger. In terms of tissue distribution, expressed in the brain.

Its subcellular location is the membrane. The catalysed reaction is K(+)(in) = K(+)(out). With respect to regulation, activated by phosphatidylinositol 4,5 biphosphate (PtdIns(4,5)P2). In terms of biological role, inward rectifier potassium channels are characterized by a greater tendency to allow potassium to flow into the cell rather than out of it. Their voltage dependence is regulated by the concentration of extracellular potassium; as external potassium is raised, the voltage range of the channel opening shifts to more positive voltages. The inward rectification is mainly due to the blockage of outward current by internal magnesium. This potassium channel is controlled by G proteins. Forms a functional channel in association with KCNJ3/GIRK1. Its function is as follows. Inward rectifier potassium channels are characterized by a greater tendency to allow potassium to flow into the cell rather than out of it. Their voltage dependence is regulated by the concentration of extracellular potassium; as external potassium is raised, the voltage range of the channel opening shifts to more positive voltages. The inward rectification is mainly due to the blockage of outward current by internal magnesium. This potassium channel is controlled by G proteins. The protein is G protein-activated inward rectifier potassium channel 2 (Kcnj6) of Mus musculus (Mouse).